The sequence spans 332 residues: RNA polymerase principal sigma factor HrdD (332 aa).

The tract at residues 1-21 is disordered; the sequence is MATRAVARRQPAASGETGAAG. The Polymerase core binding motif lies at 124–137; the sequence is DLIQEGNAGLVRAV. A DNA-binding region (H-T-H motif) is located at residues 294–313; that stretch reads LTEVGKQHGLTRERIRQIEK.

This sequence belongs to the sigma-70 factor family.

In terms of biological role, sigma factors are initiation factors that promote the attachment of RNA polymerase to specific initiation sites and are then released. The protein is RNA polymerase principal sigma factor HrdD (hrdD) of Streptomyces griseus.